The sequence spans 601 residues: Proline--tRNA ligase (601 aa).

This sequence belongs to the class-II aminoacyl-tRNA synthetase family. ProS type 1 subfamily. As to quaternary structure, homodimer.

It localises to the cytoplasm. It carries out the reaction tRNA(Pro) + L-proline + ATP = L-prolyl-tRNA(Pro) + AMP + diphosphate. Functionally, catalyzes the attachment of proline to tRNA(Pro) in a two-step reaction: proline is first activated by ATP to form Pro-AMP and then transferred to the acceptor end of tRNA(Pro). As ProRS can inadvertently accommodate and process non-cognate amino acids such as alanine and cysteine, to avoid such errors it has two additional distinct editing activities against alanine. One activity is designated as 'pretransfer' editing and involves the tRNA(Pro)-independent hydrolysis of activated Ala-AMP. The other activity is designated 'posttransfer' editing and involves deacylation of mischarged Ala-tRNA(Pro). The misacylated Cys-tRNA(Pro) is not edited by ProRS. In Tropheryma whipplei (strain TW08/27) (Whipple's bacillus), this protein is Proline--tRNA ligase.